Here is a 545-residue protein sequence, read N- to C-terminus: Eukaryotic translation initiation factor 3 subunit D-2 (545 aa).

Residues 99–113 (FRGNIRNNPRTRGRT) show a composition bias toward basic residues. Residues 99 to 158 (FRGNIRNNPRTRGRTGRGGAVTGIGGNQPGVGVNERTKYGKGRDNRRQMGRRFGRNAPTR) form a disordered region. Residues 114 to 127 (GRGGAVTGIGGNQP) are compositionally biased toward gly residues. Positions 133-145 (ERTKYGKGRDNRR) are enriched in basic and acidic residues. The RNA gate stretch occupies residues 287–301 (QFDLLTVNETALEPP).

The protein belongs to the eIF-3 subunit D family. Component of the eukaryotic translation initiation factor 3 (eIF-3) complex. The eIF-3 complex interacts with pix.

It is found in the cytoplasm. MRNA cap-binding component of the eukaryotic translation initiation factor 3 (eIF-3) complex, which is involved in protein synthesis of a specialized repertoire of mRNAs and, together with other initiation factors, stimulates binding of mRNA and methionyl-tRNAi to the 40S ribosome. The eIF-3 complex specifically targets and initiates translation of a subset of mRNAs involved in cell proliferation. In the eIF-3 complex, eif3d specifically recognizes and binds the 7-methylguanosine cap of a subset of mRNAs. The polypeptide is Eukaryotic translation initiation factor 3 subunit D-2 (Drosophila persimilis (Fruit fly)).